Consider the following 502-residue polypeptide: Lysine--tRNA ligase (502 aa).

Residues Glu413 and Glu420 each coordinate Mg(2+).

Belongs to the class-II aminoacyl-tRNA synthetase family. In terms of assembly, homodimer. Mg(2+) is required as a cofactor.

It is found in the cytoplasm. It catalyses the reaction tRNA(Lys) + L-lysine + ATP = L-lysyl-tRNA(Lys) + AMP + diphosphate. The chain is Lysine--tRNA ligase from Haemophilus influenzae (strain 86-028NP).